The chain runs to 570 residues: Urease subunit alpha (570 aa).

The Urease domain occupies 131–570 (GGMDSHIHFI…LPMAQRYFLF (440 aa)). Ni(2+) is bound by residues His-136, His-138, and Lys-219. Lys-219 carries the post-translational modification N6-carboxylysine. A substrate-binding site is contributed by His-221. Positions 248 and 274 each coordinate Ni(2+). Catalysis depends on His-322, which acts as the Proton donor. Ni(2+) is bound at residue Asp-362.

This sequence belongs to the metallo-dependent hydrolases superfamily. Urease alpha subunit family. Heterotrimer of UreA (gamma), UreB (beta) and UreC (alpha) subunits. Three heterotrimers associate to form the active enzyme. It depends on Ni cation as a cofactor. In terms of processing, carboxylation allows a single lysine to coordinate two nickel ions.

Its subcellular location is the cytoplasm. The catalysed reaction is urea + 2 H2O + H(+) = hydrogencarbonate + 2 NH4(+). It participates in nitrogen metabolism; urea degradation; CO(2) and NH(3) from urea (urease route): step 1/1. This chain is Urease subunit alpha, found in Sinorhizobium fredii (strain NBRC 101917 / NGR234).